A 388-amino-acid polypeptide reads, in one-letter code: Succinate--CoA ligase [ADP-forming] subunit beta (388 aa).

The ATP-grasp domain maps to 9-244 (KQLFAEYGLP…PSQDDPREAH (236 aa)). ATP contacts are provided by residues K46, 53–55 (GRG), E99, T102, and E107. The Mg(2+) site is built by N199 and D213. Residues N264 and 321–323 (GIV) each bind substrate.

This sequence belongs to the succinate/malate CoA ligase beta subunit family. As to quaternary structure, heterotetramer of two alpha and two beta subunits. Mg(2+) is required as a cofactor.

The catalysed reaction is succinate + ATP + CoA = succinyl-CoA + ADP + phosphate. The enzyme catalyses GTP + succinate + CoA = succinyl-CoA + GDP + phosphate. It functions in the pathway carbohydrate metabolism; tricarboxylic acid cycle; succinate from succinyl-CoA (ligase route): step 1/1. Succinyl-CoA synthetase functions in the citric acid cycle (TCA), coupling the hydrolysis of succinyl-CoA to the synthesis of either ATP or GTP and thus represents the only step of substrate-level phosphorylation in the TCA. The beta subunit provides nucleotide specificity of the enzyme and binds the substrate succinate, while the binding sites for coenzyme A and phosphate are found in the alpha subunit. The protein is Succinate--CoA ligase [ADP-forming] subunit beta of Ectopseudomonas mendocina (strain ymp) (Pseudomonas mendocina).